We begin with the raw amino-acid sequence, 259 residues long: Ribosomal RNA large subunit methyltransferase E (259 aa).

Positions 58, 60, 78, 96, and 120 each coordinate S-adenosyl-L-methionine. Lys-160 functions as the Proton acceptor in the catalytic mechanism.

It belongs to the class I-like SAM-binding methyltransferase superfamily. RNA methyltransferase RlmE family.

Its subcellular location is the cytoplasm. It carries out the reaction uridine(2552) in 23S rRNA + S-adenosyl-L-methionine = 2'-O-methyluridine(2552) in 23S rRNA + S-adenosyl-L-homocysteine + H(+). Functionally, specifically methylates the uridine in position 2552 of 23S rRNA at the 2'-O position of the ribose in the fully assembled 50S ribosomal subunit. This chain is Ribosomal RNA large subunit methyltransferase E, found in Methanococcus vannielii (strain ATCC 35089 / DSM 1224 / JCM 13029 / OCM 148 / SB).